The sequence spans 261 residues: Ribosomal RNA small subunit methyltransferase J (261 aa).

Residues 109-110, 125-126, and Asp179 contribute to the S-adenosyl-L-methionine site; these read RD and ER.

Belongs to the methyltransferase superfamily. RsmJ family.

The protein localises to the cytoplasm. The enzyme catalyses guanosine(1516) in 16S rRNA + S-adenosyl-L-methionine = N(2)-methylguanosine(1516) in 16S rRNA + S-adenosyl-L-homocysteine + H(+). In terms of biological role, specifically methylates the guanosine in position 1516 of 16S rRNA. In Pseudomonas aeruginosa (strain UCBPP-PA14), this protein is Ribosomal RNA small subunit methyltransferase J.